A 364-amino-acid chain; its full sequence is Dual-specificity RNA methyltransferase RlmN (364 aa).

The Proton acceptor role is filled by E91. A Radical SAM core domain is found at 97–333 (EDDRGTLCVS…VTVRKTRGDD (237 aa)). C104 and C338 form a disulfide bridge. [4Fe-4S] cluster is bound by residues C111, C115, and C118. S-adenosyl-L-methionine contacts are provided by residues 164 to 165 (GE), S196, 218 to 220 (SLH), and N295. The active-site S-methylcysteine intermediate is the C338.

It belongs to the radical SAM superfamily. RlmN family. The cofactor is [4Fe-4S] cluster.

The protein localises to the cytoplasm. It catalyses the reaction adenosine(2503) in 23S rRNA + 2 reduced [2Fe-2S]-[ferredoxin] + 2 S-adenosyl-L-methionine = 2-methyladenosine(2503) in 23S rRNA + 5'-deoxyadenosine + L-methionine + 2 oxidized [2Fe-2S]-[ferredoxin] + S-adenosyl-L-homocysteine. It carries out the reaction adenosine(37) in tRNA + 2 reduced [2Fe-2S]-[ferredoxin] + 2 S-adenosyl-L-methionine = 2-methyladenosine(37) in tRNA + 5'-deoxyadenosine + L-methionine + 2 oxidized [2Fe-2S]-[ferredoxin] + S-adenosyl-L-homocysteine. Its function is as follows. Specifically methylates position 2 of adenine 2503 in 23S rRNA and position 2 of adenine 37 in tRNAs. m2A2503 modification seems to play a crucial role in the proofreading step occurring at the peptidyl transferase center and thus would serve to optimize ribosomal fidelity. This is Dual-specificity RNA methyltransferase RlmN from Chromobacterium violaceum (strain ATCC 12472 / DSM 30191 / JCM 1249 / CCUG 213 / NBRC 12614 / NCIMB 9131 / NCTC 9757 / MK).